Reading from the N-terminus, the 229-residue chain is MASSNFFLPTALIALVATQAMAFDPSPLQDFCVADRNSPVRVNGFPCKDAKDVNVDDFFLEANLDKPMDTTKSKAGSNVTLINVMKLTGLNTLGISMARIDYAPKGQNPPHTHPRATEILTVFEGTLYVGFVTSNQANGENKLFTKTLNKGDVFVFPQGLIHFQFNPSYDKPAVAIAALSSQNPGAITIANAVFGSNPPISDDVLAKAFQVDKKAVDWLQAQFWENNHN.

The signal sequence occupies residues 1–22 (MASSNFFLPTALIALVATQAMA). A disulfide bridge connects residues cysteine 32 and cysteine 47. In terms of domain architecture, Cupin type-1 spans 62 to 217 (ANLDKPMDTT…AFQVDKKAVD (156 aa)). N-linked (GlcNAc...) asparagine glycosylation occurs at asparagine 78. Histidine 111, histidine 113, glutamate 118, and histidine 162 together coordinate Mn(2+).

The protein belongs to the germin family. Oligomer (believed to be a pentamer but probably hexamer).

It localises to the secreted. Its subcellular location is the extracellular space. The protein localises to the apoplast. May play a role in plant defense. Probably has no oxalate oxidase activity even if the active site is conserved. The protein is Germin-like protein 12-1 of Oryza sativa subsp. japonica (Rice).